The sequence spans 115 residues: MPTDHEQPCGPRHRSFCLNGGICYVIPTIPSPFCRCIENYTGARCEEVFLPSSSIPSESNLSAAFVVLAVLLTLTIAALCFLCRKGHLQRASSVQCEISLVETNNTRTRHSHREH.

Residues 1 to 62 are Extracellular-facing; it reads MPTDHEQPCG…SSIPSESNLS (62 aa). The EGF-like domain occupies 5–46; it reads HEQPCGPRHRSFCLNGGICYVIPTIPSPFCRCIENYTGARCE. Disulfide bonds link Cys9/Cys23, Cys17/Cys34, and Cys36/Cys45. 2 N-linked (GlcNAc...) asparagine glycosylation sites follow: Asn39 and Asn60. Residues 63-83 form a helical membrane-spanning segment; it reads AAFVVLAVLLTLTIAALCFLC. Over 84-115 the chain is Cytoplasmic; it reads RKGHLQRASSVQCEISLVETNNTRTRHSHREH.

This sequence belongs to the neuregulin family. Interacts with ERBB4. Post-translationally, proteolytic cleavage close to the plasma membrane on the external face leads to the release of the soluble growth factor form. Extensive glycosylation precedes the proteolytic cleavage. As to expression, highly expressed in pancreas; weakly expressed in muscle.

It localises to the cell membrane. The protein resides in the secreted. In terms of biological role, low affinity ligand for the ERBB4 tyrosine kinase receptor. Concomitantly recruits ERBB1 and ERBB2 coreceptors, resulting in ligand-stimulated tyrosine phosphorylation and activation of the ERBB receptors. Does not bind to the ERBB1, ERBB2 and ERBB3 receptors. The sequence is that of Pro-neuregulin-4, membrane-bound isoform (Nrg4) from Mus musculus (Mouse).